Here is a 317-residue protein sequence, read N- to C-terminus: Tyrosine--tRNA ligase (317 aa).

Residue Tyr-32 coordinates L-tyrosine. Residues 37 to 45 (PSGEIHLGH) carry the 'HIGH' region motif. L-tyrosine is bound by residues Tyr-152, Gln-156, Asp-159, and Gln-174. The 'KMSKS' region signature appears at 208–212 (KMSSS). Ser-211 provides a ligand contact to ATP.

This sequence belongs to the class-I aminoacyl-tRNA synthetase family. TyrS type 3 subfamily. As to quaternary structure, homodimer.

The protein localises to the cytoplasm. The enzyme catalyses tRNA(Tyr) + L-tyrosine + ATP = L-tyrosyl-tRNA(Tyr) + AMP + diphosphate + H(+). Catalyzes the attachment of tyrosine to tRNA(Tyr) in a two-step reaction: tyrosine is first activated by ATP to form Tyr-AMP and then transferred to the acceptor end of tRNA(Tyr). In Methanocorpusculum labreanum (strain ATCC 43576 / DSM 4855 / Z), this protein is Tyrosine--tRNA ligase.